The following is a 216-amino-acid chain: Holliday junction branch migration complex subunit RuvA (216 aa).

The interval methionine 1–lysine 64 is domain I. The domain II stretch occupies residues serine 65 to threonine 143. Residues serine 144–valine 163 are flexible linker. The interval leucine 164 to arginine 216 is domain III.

This sequence belongs to the RuvA family. Homotetramer. Forms an RuvA(8)-RuvB(12)-Holliday junction (HJ) complex. HJ DNA is sandwiched between 2 RuvA tetramers; dsDNA enters through RuvA and exits via RuvB. An RuvB hexamer assembles on each DNA strand where it exits the tetramer. Each RuvB hexamer is contacted by two RuvA subunits (via domain III) on 2 adjacent RuvB subunits; this complex drives branch migration. In the full resolvosome a probable DNA-RuvA(4)-RuvB(12)-RuvC(2) complex forms which resolves the HJ.

Its subcellular location is the cytoplasm. In terms of biological role, the RuvA-RuvB-RuvC complex processes Holliday junction (HJ) DNA during genetic recombination and DNA repair, while the RuvA-RuvB complex plays an important role in the rescue of blocked DNA replication forks via replication fork reversal (RFR). RuvA specifically binds to HJ cruciform DNA, conferring on it an open structure. The RuvB hexamer acts as an ATP-dependent pump, pulling dsDNA into and through the RuvAB complex. HJ branch migration allows RuvC to scan DNA until it finds its consensus sequence, where it cleaves and resolves the cruciform DNA. The sequence is that of Holliday junction branch migration complex subunit RuvA from Francisella tularensis subsp. tularensis (strain WY96-3418).